The sequence spans 418 residues: MSKVEFNKETGPREVFCGLTSIVWLHRRMPDAFFLVVGSRTCAHLIQSAAGVMIFAEPRFGTAILEEKDLAGLADAHEELDRVVNDLIARRPEIKTLFLVGSCPSEVIKLDLATVAEKLNKRFLGQVRFVNYSGSGIETTFTQGEDGALKALIPLMESSNEEKLLLVGTLANNVEDRFKKIFKNLGISNIESFPPRQSTELPKIGKNTKVLLTQPYLSDTVRDLKHRGCEIISAPFPLGIEGSTEWFLAAAKAFKINELKVHEILSPLINRAKLALESHKEILKGKRLFLLPESQLEISLARFLHNECEMDLVEVGTPYLNKDLMKEEINLLPDNTKIVEGQHVEKQLDRVRESNPDLVVCGMGLANPLEAEGISTKWSIEMVFSPIHGIDQAADLAGLFSKPLRRNQILTTKTLVTH.

3 residues coordinate [4Fe-4S] cluster: C17, C42, and C103.

The protein belongs to the BchN/ChlN family. In terms of assembly, protochlorophyllide reductase is composed of three subunits; ChlL, ChlN and ChlB. Forms a heterotetramer of two ChlB and two ChlN subunits. [4Fe-4S] cluster is required as a cofactor.

It catalyses the reaction chlorophyllide a + oxidized 2[4Fe-4S]-[ferredoxin] + 2 ADP + 2 phosphate = protochlorophyllide a + reduced 2[4Fe-4S]-[ferredoxin] + 2 ATP + 2 H2O. It functions in the pathway porphyrin-containing compound metabolism; chlorophyll biosynthesis (light-independent). In terms of biological role, component of the dark-operative protochlorophyllide reductase (DPOR) that uses Mg-ATP and reduced ferredoxin to reduce ring D of protochlorophyllide (Pchlide) to form chlorophyllide a (Chlide). This reaction is light-independent. The NB-protein (ChlN-ChlB) is the catalytic component of the complex. In Prochlorococcus marinus (strain AS9601), this protein is Light-independent protochlorophyllide reductase subunit N.